We begin with the raw amino-acid sequence, 385 residues long: Deoxyguanosinetriphosphate triphosphohydrolase-like protein (385 aa).

The 123-residue stretch at 75 to 197 (RLTHTLEVGQ…VDAADALAYT (123 aa)) folds into the HD domain.

This sequence belongs to the dGTPase family. Type 2 subfamily.

This Deinococcus geothermalis (strain DSM 11300 / CIP 105573 / AG-3a) protein is Deoxyguanosinetriphosphate triphosphohydrolase-like protein.